An 847-amino-acid chain; its full sequence is MHLLGPWLLLLVLEYLAFSDSSKWAFEHPETLYAWEGACVWIPCTYRALDRDLESFILFHNPEYNKNTSKFDGTRLYESTKDGKVPSEQKRVQFLGDKNKNCTLSIHPVHVNDSGQLGLRMESKTAKWMERIHLNVSERPFPPHIQLPPEIQESQEVTLTCLLNFSCYGYPIQLQWLLEGVPMRQAAVTSTSLTIKSVFTRSELKFSPQWSHHGKIVTCQLQDADGKFLSNDTVQLNVKHTPKLEIKVTPSDAIVREGESVTMTCEVSSSNPEYTTISWLKDGTSLKKQNTLMLNLHEVTKDQSGKYCCQVSNDVGPGRSAEVFLQVQYAPEPSTVQILHSPAVEGSQVEFLCMSLANPLPTNYTWYHNGKEMQGRTEEKVHIPKILPWHAGTYSCVAENILGTGQRGPGAELDVQYPPKKVTTVIQNPTPIREGDTVTLSCNYNSSNPSVTRYEWKPHGAWEEPSLGVLKIQNVGWGNTTIACAACNSWCSWASPVALNVQYAPRDVRVRKIKPLSEIHSGNSVSLQCDFSSSHPKEVQFFWEKNGRLLGKESRLNFDSISPEDAGSYSCWVNNSIGQTASKAWTLEVLYAPRRLRVSMSPGDQVMEGKSATLTCESDANPPVSHYTWFDWNNQSLPYHSQKLRLEPVKVQHSGAYWCQGTNSVGKGHSPLSTLTVYYSPETIGRRVAVGFGSCLAILILAICGLKLQRRWKRTQSQQGLQENSSGQSFFVRNKKVRRAPLSEGPHSLGCYNPMMEDGISYTTLRFPETNIPRTGDAETSEMQSPPPDCDDTVTYSVLHKRQMGDYENVIPDFSEDEGIHYSELIQFGVGERPQAQENVDYVILKH.

Positions 1-19 (MHLLGPWLLLLVLEYLAFS) are cleaved as a signal peptide. The region spanning 20–138 (DSSKWAFEHP…MERIHLNVSE (119 aa)) is the Ig-like V-type domain. At 20–687 (DSSKWAFEHP…YYSPETIGRR (668 aa)) the chain is on the extracellular side. Asn67, Asn101, and Asn112 each carry an N-linked (GlcNAc...) asparagine glycan. Residue Arg120 coordinates N-acetylneuraminate. 3 N-linked (GlcNAc...) asparagine glycosylation sites follow: Asn135, Asn164, and Asn231. 6 consecutive Ig-like C2-type domains span residues 143–235 (PHIQ…DTVQ), 242–326 (PKLE…VFLQ), 331–416 (PEPS…LDVQ), 419–500 (PKKV…VALN), 505–582 (PRDV…QTAS), and 593–676 (PRRL…STLT). A disulfide bridge links Cys161 with Cys219. 2 disulfides stabilise this stretch: Cys265–Cys309 and Cys353–Cys396. N-linked (GlcNAc...) asparagine glycosylation is found at Asn363, Asn428, Asn445, Asn448, and Asn479. Disulfide bonds link Cys442–Cys484 and Cys529–Cys571. Asn574 and Asn634 each carry an N-linked (GlcNAc...) asparagine glycan. A disulfide bridge connects residues Cys616 and Cys659. A helical transmembrane segment spans residues 688–708 (VAVGFGSCLAILILAICGLKL). Residues 709 to 847 (QRRWKRTQSQ…ENVDYVILKH (139 aa)) are Cytoplasmic-facing. Phosphoserine is present on residues Ser725, Ser726, and Ser729. 2 short sequence motifs (ITIM motif) span residues 760-765 (ISYTTL) and 794-799 (VTYSVL). Tyr762 carries the post-translational modification Phosphotyrosine. 3 positions are modified to phosphotyrosine: Tyr807, Tyr822, and Tyr842. 2 consecutive short sequence motifs (ITIM motif) follow at residues 820-825 (IHYSEL) and 840-845 (VDYVIL).

The protein belongs to the immunoglobulin superfamily. SIGLEC (sialic acid binding Ig-like lectin) family. As to quaternary structure, predominantly monomer of isoform CD22-beta. Also found as heterodimer of isoform CD22-beta and a shorter isoform. Interacts with PTPN6/SHP-1, LYN, SYK, PIK3R1/PIK3R2 and PLCG1 upon phosphorylation. Interacts with GRB2, INPP5D and SHC1 upon phosphorylation. May form a complex with INPP5D/SHIP, GRB2 and SHC1. Phosphorylation of Tyr-762, Tyr-807 and Tyr-822 are involved in binding to SYK, GRB2 and SYK, respectively. Phosphorylation of Tyr-842 is involved in binding to SYK, PLCG2 and PIK3R1/PIK3R2. Post-translationally, phosphorylated on tyrosine residues by LYN.

It is found in the cell membrane. Its function is as follows. Most highly expressed siglec (sialic acid-binding immunoglobulin-like lectin) on B-cells that plays a role in various aspects of B-cell biology including differentiation, antigen presentation, and trafficking to bone marrow. Binds to alpha 2,6-linked sialic acid residues of surface molecules such as CD22 itself, CD45 and IgM in a cis configuration. Can also bind to ligands on other cells as an adhesion molecule in a trans configuration. Acts as an inhibitory coreceptor on the surface of B-cells and inhibits B-cell receptor induced signaling, characterized by inhibition of the calcium mobilization and cellular activation. Mechanistically, the immunoreceptor tyrosine-based inhibitory motif domain is phosphorylated by the Src kinase LYN, which in turn leads to the recruitment of the protein tyrosine phosphatase 1/PTPN6, leading to the negative regulation of BCR signaling. If this negative signaling from is of sufficient strength, apoptosis of the B-cell can be induced. The chain is B-cell receptor CD22 from Pan paniscus (Pygmy chimpanzee).